The chain runs to 255 residues: Imidazole glycerol phosphate synthase subunit HisF (255 aa).

Active-site residues include Asp12 and Asp131.

The protein belongs to the HisA/HisF family. Heterodimer of HisH and HisF.

It localises to the cytoplasm. The enzyme catalyses 5-[(5-phospho-1-deoxy-D-ribulos-1-ylimino)methylamino]-1-(5-phospho-beta-D-ribosyl)imidazole-4-carboxamide + L-glutamine = D-erythro-1-(imidazol-4-yl)glycerol 3-phosphate + 5-amino-1-(5-phospho-beta-D-ribosyl)imidazole-4-carboxamide + L-glutamate + H(+). It functions in the pathway amino-acid biosynthesis; L-histidine biosynthesis; L-histidine from 5-phospho-alpha-D-ribose 1-diphosphate: step 5/9. Its function is as follows. IGPS catalyzes the conversion of PRFAR and glutamine to IGP, AICAR and glutamate. The HisF subunit catalyzes the cyclization activity that produces IGP and AICAR from PRFAR using the ammonia provided by the HisH subunit. The protein is Imidazole glycerol phosphate synthase subunit HisF of Neisseria meningitidis serogroup C / serotype 2a (strain ATCC 700532 / DSM 15464 / FAM18).